We begin with the raw amino-acid sequence, 486 residues long: MERQPKSLSDAVQLLQTTEIISKCTQTIIAEWSNEAETFKKRASSGRAGAELVLPSHELFNAQRTITAAIGKLIELVSEPSVRILEIAGQYQESRALYIAVERRIPDILASQDNEGGMPVKELSSRTGIEYRKLSRILRYLCSMGTFRQVGPDVFANNTISACLVANEPLRAYVRLTGSEAFTASDRLPKTLLDPSTGPSYDVTRTAWQDAIGTTKPRWEWIEERVEPDKLLDSGYHYPGIPSLILEPQPPGEDGLVARPELEIMGLAMVGGGRVFGAAHVFDFPWASLDNALVVDVGGGVGGFALQLSKVYPDLRFVIQDRGPVIQQALESVWPNENPAALKDQRVQFMEHSFFDKNPVEGADVYYLRYVLHDWSDDYCVNILSHIRESMAPHSRLLICEQVMNTTIGDPDLTSAPAPLPANYGFHARFSHSRDLTMMAAINGIERTPEEFKTILKSAGLALKQIWECRSQVSLLEAVRADARTA.

S-adenosyl-L-methionine contacts are provided by residues 298-299 (GG), Asp-321, 353-354 (SF), and Arg-369. His-373 functions as the Proton acceptor in the catalytic mechanism.

It belongs to the class I-like SAM-binding methyltransferase superfamily. Cation-independent O-methyltransferase family.

It carries out the reaction emodin + S-adenosyl-L-methionine = questin + S-adenosyl-L-homocysteine + H(+). It participates in secondary metabolite biosynthesis. In terms of biological role, O-methyltransferase; part of the gene cluster that mediates the biosynthesis of geodin, an intermediate in the biosynthesis of other natural products. The pathway begins with the synthesis of atrochrysone thioester by the polyketide synthase (PKS) gedC. The atrochrysone carboxyl ACP thioesterase gedB then breaks the thioester bond and releases the atrochrysone carboxylic acid from gedC. The atrochrysone carboxylic acid is then converted to atrochrysone which is further transformed into emodinanthrone. The next step is performed by the emodinanthrone oxygenase gedH that catalyzes the oxidation of emodinanthrone to emodin. Emodin O-methyltransferase encoded probably by gedA then catalyzes methylation of the 8-hydroxy group of emodin to form questin. Ring cleavage of questin by questin oxidase gedK leads to desmethylsulochrin via several intermediates including questin epoxide. Another methylation step probably catalyzed by methyltransferase gedG leads to the formation of sulochrin which is further converted to dihydrogeodin by the sulochrin halogenase gedL. Finally, the dihydrogeodin oxidase gedJ catalyzes the stereospecific phenol oxidative coupling reaction converting dihydrogeodin to geodin. The chain is O-methyltransferase gedA from Aspergillus terreus (strain NIH 2624 / FGSC A1156).